Consider the following 575-residue polypeptide: MKHMPRKMYSCDFETTTKVEDCRVWAYGYMNIEDHSEYKIGNSLDEFMAWVLKVQADLYFHNLKFDGAFIINWLERNGFKWSADGLPNTYNTIISRMGQWYMIDICLGYKGKRKIHTVIYDSLKKLPFPVKKIAKDFKLTVLKGDIDYHKERPVGYKITPEEYAYIKNDIQIIAEALLIQFKQGLDRMTAGSDSLKGFKDIITTKKFKKVFPTLSLGLDKEVRYAYRGGFTWLNDRFKEKEIGEGMVFDVNSLYPAQMYSRLLPYGEPIVFEGKYVWDEDYPLHIQHIRCEFELKEGYIPTIQIKRSRFYKGNEYLKSSGGEIADLWLSNVDLELMKEHYDLYNVEYISGLKFKATTGLFKDFIDKWTYIKTTSEGAIKQLAKLMLNSLYGKFASNPDVTGKVPYLKENGALGFRLGEEETKDPVYTPMGVFITAWARYTTITAAQACYDRIIYCDTDSIHLTGTEIPDVIKDIVDPKKLGYWAHESTFKRAKYLRQKTYIQDIYMKEVDGKLVEGSPDDYTDIKFSVKCAGMTDKIKKEVTFENFKVGFSRKMKPKPVQVPGGVVLVDDTFTIK.

Positions 1–191 are 3'-5' exonuclease and strand displacement activities; that stretch reads MKHMPRKMYS…KQGLDRMTAG (191 aa). The Mg(2+) site is built by Asp145 and Asp169. Residues 192 to 229 form an involved in DNA-binding, coordination between DNA synthesis and degradation and TP interaction region; the sequence is SDSLKGFKDIITTKKFKKVFPTLSLGLDKEVRYAYRGG. An initiation, polymerization and pyrophosphorolytic activities region spans residues 230–562; sequence FTWLNDRFKE…KMKPKPVQVP (333 aa). The Mg(2+) site is built by Asp249 and Val250. 5-methyl-UTP-binding residues include Tyr254, Lys371, and Lys383. The tract at residues 398-420 is TPR2; that stretch reads DVTGKVPYLKENGALGFRLGEEE. A YCDTD motif is present at residues 454–458; the sequence is YCDTD. Asp456 and Asp458 together coordinate Mg(2+). Asp458 is a binding site for 5-methyl-UTP. Positions 563 to 575 are involved in DNA-binding and TP interaction; it reads GGVVLVDDTFTIK.

Belongs to the DNA polymerase type-B family. In terms of assembly, interacts with the primer terminal protein; this interaction allows the initiation of TP-primed DNA replication at both viral DNA ends. Interacts with DNA. The cofactor is Mg(2+).

The enzyme catalyses DNA(n) + a 2'-deoxyribonucleoside 5'-triphosphate = DNA(n+1) + diphosphate. In terms of biological role, polymerase responsible for protein-primed viral DNA replication by strand displacement with high processivity and fidelity. To start replication, the DNA polymerase forms a heterodimer with a free primer terminal protein (TP), recognizes the replication origins at both 5' ends of the linear chromosome, and initiates replication using as primer the OH-group of Ser-232 of the TP. This polymerase possesses three enzymatic activities: DNA synthesis (polymerase), primer terminal protein (TP) deoxynucleotidylation, which is the formation of a covalent linkage (phosphoester) between the hydroxyl group of a specific serine residue in TP and 5'-dAMP, a reaction directed by the second T at the 3' end, and 3' to 5' exonuclease activity. Exonuclease activity has a proofreading purpose. DNA polymerase edits the polymerization errors using an intramolecular pathway as the primer terminus travels from one active site to the other without dissociation from the DNA. DNA polymerization catalyzed by the DNA polymerase is a highly accurate process, but the protein-primed initiation is a quite inaccurate reaction. Since the polymerase initiates the replication on the second thymine, the TP-dAMP initiation product translocates backwards to recover the template information of the first nucleotide (sliding back-mechanism). The sequence is that of DNA polymerase (2) from Bacillus subtilis (Bacteriophage phi-29).